Consider the following 140-residue polypeptide: Ribosome-binding factor A (140 aa).

It belongs to the RbfA family. Monomer. Binds 30S ribosomal subunits, but not 50S ribosomal subunits or 70S ribosomes.

The protein localises to the cytoplasm. Its function is as follows. One of several proteins that assist in the late maturation steps of the functional core of the 30S ribosomal subunit. Associates with free 30S ribosomal subunits (but not with 30S subunits that are part of 70S ribosomes or polysomes). Required for efficient processing of 16S rRNA. May interact with the 5'-terminal helix region of 16S rRNA. In Cereibacter sphaeroides (strain ATCC 17023 / DSM 158 / JCM 6121 / CCUG 31486 / LMG 2827 / NBRC 12203 / NCIMB 8253 / ATH 2.4.1.) (Rhodobacter sphaeroides), this protein is Ribosome-binding factor A.